The primary structure comprises 125 residues: Period circadian protein (125 aa).

The interval 1–125 (EGSGGSGSSG…VTLTESLLNK (125 aa)) is disordered. Repeat copies occupy residues 30–31 (GT), 33–34 (GT), and 35–36 (GT). Over residues 30–84 (GTGGTGTNTGTNTGTGTGTGTGTGTGTGTGTGTGTGTGTGTGTGTGTGKGAGAGT) the composition is skewed to gly residues. Residues 30 to 86 (GTGGTGTNTGTNTGTGTGTGTGTGTGTGTGTGTGTGTGTGTGTGTGTGKGAGAGTGT) are 28 X 2 AA approximate tandem repeats of G-[TA]. One copy of the 4; approximate repeat lies at 37–38 (NT). Repeat unit 5 spans residues 39 to 40 (GT). A 6; approximate repeat occupies 41–42 (NT). 17 repeat units span residues 43–44 (GT), 45–46 (GT), 47–48 (GT), 49–50 (GT), 51–52 (GT), 53–54 (GT), 55–56 (GT), 57–58 (GT), 59–60 (GT), 61–62 (GT), 63–64 (GT), 65–66 (GT), 67–68 (GT), 69–70 (GT), 71–72 (GT), 73–74 (GT), and 75–76 (GT). One copy of the 24; approximate repeat lies at 77–78 (GK). 4 tandem repeats follow at residues 79-80 (GA), 81-82 (GA), 83-84 (GT), and 85-86 (GT). Low complexity predominate over residues 85 to 112 (GTATNETAGPGTTTTTTTRSTTTAATAA). The span at 116-125 (VTLTESLLNK) shows a compositional bias: polar residues.

In terms of assembly, forms a heterodimer with timeless (TIM); the complex then translocates into the nucleus. Phosphorylated with a circadian rhythmicity, probably by the double-time protein (dbt). Phosphorylation could be implicated in the stability of per monomer and in the formation of heterodimer per-tim.

It localises to the nucleus. The protein resides in the cytoplasm. The protein localises to the perinuclear region. In terms of biological role, essential for biological clock functions. Determines the period length of circadian and ultradian rhythms; an increase in PER dosage leads to shortened circadian rhythms and a decrease leads to lengthened circadian rhythms. Essential for the circadian rhythmicity of locomotor activity, eclosion behavior, and for the rhythmic component of the male courtship song that originates in the thoracic nervous system. The biological cycle depends on the rhythmic formation and nuclear localization of the TIM-PER complex. Light induces the degradation of TIM, which promotes elimination of PER. Nuclear activity of the heterodimer coordinatively regulates PER and TIM transcription through a negative feedback loop. Behaves as a negative element in circadian transcriptional loop. Does not appear to bind DNA, suggesting indirect transcriptional inhibition. This Drosophila ananassae (Fruit fly) protein is Period circadian protein (per).